A 202-amino-acid chain; its full sequence is Transmembrane protein 223 (202 aa).

Residues methionine 1–arginine 43 are Mitochondrial matrix-facing. Residues phenylalanine 44–isoleucine 64 traverse the membrane as a helical segment. Topologically, residues alanine 65–glycine 97 are mitochondrial intermembrane. The chain crosses the membrane as a helical span at residues leucine 98–leucine 118. Residues arginine 119–leucine 202 are Mitochondrial matrix-facing.

It belongs to the TMEM223 family. As to quaternary structure, associates with the mitochondrial ribosome.

Its subcellular location is the mitochondrion inner membrane. Its function is as follows. Mitochondrial ribosome-associated protein involved in the first steps of cytochrome c oxidase complex (complex IV) biogenesis. Stimulates the translation of MT-CO1 mRNA and is a constituent of early MT-CO1 assembly intermediates. This is Transmembrane protein 223 from Bos taurus (Bovine).